The sequence spans 129 residues: Small ribosomal subunit protein uS11 (129 aa).

Belongs to the universal ribosomal protein uS11 family. As to quaternary structure, part of the 30S ribosomal subunit. Interacts with proteins S7 and S18. Binds to IF-3.

Functionally, located on the platform of the 30S subunit, it bridges several disparate RNA helices of the 16S rRNA. Forms part of the Shine-Dalgarno cleft in the 70S ribosome. The sequence is that of Small ribosomal subunit protein uS11 from Histophilus somni (strain 129Pt) (Haemophilus somnus).